We begin with the raw amino-acid sequence, 625 residues long: Alpha-1,3-galactosidase A (625 aa).

An N-terminal signal peptide occupies residues methionine 1 to alanine 32. PbH1 repeat units follow at residues lysine 342–glycine 364, threonine 460–threonine 482, arginine 483–alanine 505, valine 516–glutamate 537, and valine 573–arginine 611.

This sequence belongs to the glycosyl hydrolase 110 family. A subfamily.

It catalyses the reaction Hydrolysis of terminal, non-reducing branched (1-&gt;3)-alpha-D-galactosidic residues, producing free D-galactose.. The enzyme catalyses Hydrolysis of terminal, non-reducing alpha-D-galactose residues in alpha-D-galactosides, including galactose oligosaccharides, galactomannans and galactolipids.. Functionally, alpha-galactosidase that specifically removes branched alpha-1,3-linked galactose residues present in blood group B antigens. Has no activity toward linear alpha-1,3-linked galactose residues. This is Alpha-1,3-galactosidase A (glaA) from Streptomyces avermitilis (strain ATCC 31267 / DSM 46492 / JCM 5070 / NBRC 14893 / NCIMB 12804 / NRRL 8165 / MA-4680).